The chain runs to 360 residues: Blue-light-activated histidine kinase 1 (360 aa).

Residues 38–109 enclose the PAS domain; it reads LFLETTQQTR…KLREGIAAER (72 aa). C85 is modified (S-4a-FMN cysteine). Residues 109-163 enclose the PAC domain; the sequence is RYTVVDLLNYRKDGIPFWNAVHVGPIYGEDGTLQYFYGSQWDITDIVAERRKAET. Position 173 is a phosphohistidine; by autocatalysis (H173). Residues 260 to 303 are HWE histidine kinase domain; it reads RSVTALGLALHELATNAVKYGALSVDAGRVEISWSREDGDVTLV.

Post-translationally, FMN binds covalently to cysteine after exposure to blue light and this bond is spontaneously broken in the dark.

It carries out the reaction ATP + protein L-histidine = ADP + protein N-phospho-L-histidine.. Functionally, photosensitive kinase that is involved in increased bacterial virulence upon exposure to light. The protein is Blue-light-activated histidine kinase 1 of Erythrobacter litoralis (strain HTCC2594).